Here is a 228-residue protein sequence, read N- to C-terminus: uncharacterized protein (228 aa).

The protein resides in the mitochondrion. This is an uncharacterized protein from Emericella nidulans (Aspergillus nidulans).